Reading from the N-terminus, the 488-residue chain is GTPase Der (488 aa).

EngA-type G domains follow at residues 3 to 166 (PVVA…AEAM) and 199 to 372 (IKLA…DSAT). Residues 9–16 (GRPNVGKS), 56–60 (DTGGI), 118–121 (NKVD), 205–212 (GKPNVGKS), 252–256 (DTAGV), and 317–320 (NKWD) each bind GTP. A KH-like domain is found at 373-457 (RRVSTSMLTR…PIQLRFQEGD (85 aa)). Positions 469-488 (MSQERRRKRALSHIKDRKTK) are disordered. Residues 473 to 488 (RRRKRALSHIKDRKTK) are compositionally biased toward basic residues.

It belongs to the TRAFAC class TrmE-Era-EngA-EngB-Septin-like GTPase superfamily. EngA (Der) GTPase family. In terms of assembly, associates with the 50S ribosomal subunit.

In terms of biological role, GTPase that plays an essential role in the late steps of ribosome biogenesis. This is GTPase Der from Shewanella sp. (strain W3-18-1).